The primary structure comprises 447 residues: 3-phosphoshikimate 1-carboxyvinyltransferase (447 aa).

Residues Lys-36, Ser-37, and Arg-41 each contribute to the 3-phosphoshikimate site. Lys-36 serves as a coordination point for phosphoenolpyruvate. The phosphoenolpyruvate site is built by Gly-109 and Arg-138. 3-phosphoshikimate-binding residues include Ser-183, Gln-185, Asp-333, and Lys-360. Gln-185 is a phosphoenolpyruvate binding site. The active-site Proton acceptor is Asp-333. Arg-364 and Arg-406 together coordinate phosphoenolpyruvate.

This sequence belongs to the EPSP synthase family. Monomer.

It is found in the cytoplasm. It carries out the reaction 3-phosphoshikimate + phosphoenolpyruvate = 5-O-(1-carboxyvinyl)-3-phosphoshikimate + phosphate. The protein operates within metabolic intermediate biosynthesis; chorismate biosynthesis; chorismate from D-erythrose 4-phosphate and phosphoenolpyruvate: step 6/7. Its function is as follows. Catalyzes the transfer of the enolpyruvyl moiety of phosphoenolpyruvate (PEP) to the 5-hydroxyl of shikimate-3-phosphate (S3P) to produce enolpyruvyl shikimate-3-phosphate and inorganic phosphate. In Synechocystis sp. (strain ATCC 27184 / PCC 6803 / Kazusa), this protein is 3-phosphoshikimate 1-carboxyvinyltransferase.